A 445-amino-acid chain; its full sequence is ATP-dependent protease ATPase subunit HslU (445 aa).

Residues Ile17, 59–64, Asp254, Glu319, and Arg391 each bind ATP; that span reads GVGKTE.

It belongs to the ClpX chaperone family. HslU subfamily. A double ring-shaped homohexamer of HslV is capped on each side by a ring-shaped HslU homohexamer. The assembly of the HslU/HslV complex is dependent on binding of ATP.

The protein localises to the cytoplasm. Its function is as follows. ATPase subunit of a proteasome-like degradation complex; this subunit has chaperone activity. The binding of ATP and its subsequent hydrolysis by HslU are essential for unfolding of protein substrates subsequently hydrolyzed by HslV. HslU recognizes the N-terminal part of its protein substrates and unfolds these before they are guided to HslV for hydrolysis. The sequence is that of ATP-dependent protease ATPase subunit HslU from Pseudomonas syringae pv. tomato (strain ATCC BAA-871 / DC3000).